Reading from the N-terminus, the 489-residue chain is Rhamnulokinase (489 aa).

13 to 17 (ASSGR) contributes to the ATP binding site. Cysteine 68 and cysteine 222 are joined by a disulfide. Residues glycine 83 and 236 to 238 (HDT) contribute to the substrate site. The active-site Proton acceptor is the aspartate 237. Threonine 259 lines the ATP pocket. Position 296 (asparagine 296) interacts with substrate. Glutamine 304 provides a ligand contact to ATP. Cysteine 353 and cysteine 370 form a disulfide bridge. Glycine 402 provides a ligand contact to ATP. Cysteine 413 and cysteine 417 are joined by a disulfide.

This sequence belongs to the rhamnulokinase family. As to quaternary structure, monomer. Mg(2+) serves as cofactor.

It carries out the reaction L-rhamnulose + ATP = L-rhamnulose 1-phosphate + ADP + H(+). It participates in carbohydrate degradation; L-rhamnose degradation; glycerone phosphate from L-rhamnose: step 2/3. Its function is as follows. Involved in the catabolism of L-rhamnose (6-deoxy-L-mannose). Catalyzes the transfer of the gamma-phosphate group from ATP to the 1-hydroxyl group of L-rhamnulose to yield L-rhamnulose 1-phosphate. This chain is Rhamnulokinase, found in Escherichia coli (strain SE11).